Reading from the N-terminus, the 1011-residue chain is MDPPSPSRTSQTQPTATSPLTSYRWHTGGGGEKAAGGFRWGRFAGWGRALSHQEPMVSTQPAPRSIFRRVLSAPPKESRTSRLRLSKALWGRHKNPPPEPDPEPEQEAPELEPEPELEPPTPQIPEAPTPNVPVWDIGGFTLLDGKLVLLGGEEEGPRRPRVGSASSEGSIHVAMGNFRDPDRMPGKTEPETAGPNQVHNVRGLLKRLKEKKKARLEPRDGPPSALGSRESLATLSELDLGAERDVRIWPLHPSLLGEPHCFQVTWTGGSRCFSCRSAAERDRWIEDLRRQFQPTQDNVEREETWLSVWVHEAKGLPRAAAGAPGVRAELWLDGALLARTAPRAGPGQLFWAERFHFEALPPARRLSLRLRGLGPGSAVLGRVALALEELDAPRAPAAGLERWFPLLGAPAGAALRARIRARRLRVLPSERYKELAEFLTFHYARLCGALEPALPAQAKEELAAAMVRVLRATGRAQALVTDLGTAELARCGGREALLFRENTLATKAIDEYMKLVAQDYLQETLGQVVRRLCASTEDCEVDPSKCPASELPEHQARLRNSCEEVFETIIHSYDWFPAELGIVFSSWREACKERGSEVLGPRLVCASLFLRLLCPAILAPSLFGLAPDHPAPGPARTLTLIAKVIQNLANRAPFGEKEAYMGFMNSFLEEHGPAMQCFLDQVAMVDVDAAPSGYQGSGDLALQLAVLHAQLCTIFAELDQTTRDTLEPLPTILRAIEEGQPVLVSVPMRLPLPPAQVHSSLSAGEKPGFLAPRDLPKHTPLISKSQSLRSVRRSESWARPRPDEERPLRRPRPVQRTQSVPVRRPARRRQSAGPWPRPKGSLSMGPAPRARPWTRDSASLPRKPSVPWQRQMDQPQDRNQALGTHRPVNKLAELQCEVAALREEQKVLSRLVESLSTQIRALTEQQEQLRGQLQDLDSRLRAGSSEFDSEHNLTSNEGHSLKNLEHRLNEMERTQAQLRDAVQSLQLSPRTRGSWSQPQPLKAPCLNGDTT.

A disordered region spans residues 1-38 (MDPPSPSRTSQTQPTATSPLTSYRWHTGGGGEKAAGGF). Positions 7–22 (SRTSQTQPTATSPLTS) are enriched in low complexity. Phosphoserine occurs at positions 18 and 51. Disordered stretches follow at residues 52 to 136 (HQEP…PVWD), 151 to 197 (GGEE…GPNQ), and 209 to 230 (KEKKKARLEPRDGPPSALGSRE). A compositionally biased stretch (basic residues) spans 81 to 95 (SRLRLSKALWGRHKN). A compositionally biased stretch (acidic residues) spans 100-117 (PDPEPEQEAPELEPEPEL). Over residues 118–131 (EPPTPQIPEAPTPN) the composition is skewed to pro residues. Ser-164, Ser-166, Ser-167, and Ser-170 each carry phosphoserine. The segment covering 179-190 (RDPDRMPGKTEP) has biased composition (basic and acidic residues). The PH domain maps to 197–293 (QVHNVRGLLK…WIEDLRRQFQ (97 aa)). Ser-224, Ser-228, and Ser-231 each carry phosphoserine. Thr-234 carries the phosphothreonine modification. Residues 284-404 (WIEDLRRQFQ…APAAGLERWF (121 aa)) enclose the C2 domain. The Ras-GAP domain maps to 474-682 (GRAQALVTDL…PAMQCFLDQV (209 aa)). Disordered stretches follow at residues 756–885 (QVHS…LGTH) and 987–1011 (LSPRTRGSWSQPQPLKAPCLNGDTT). A phosphoserine mark is found at Ser-787 and Ser-790. The segment covering 792-808 (RRSESWARPRPDEERPL) has biased composition (basic and acidic residues). 2 stretches are compositionally biased toward polar residues: residues 871-882 (QMDQPQDRNQAL) and 987-999 (LSPRTRGSWSQPQ). A coiled-coil region spans residues 888 to 988 (VNKLAELQCE…RDAVQSLQLS (101 aa)). At Ser-988 the chain carries Phosphoserine.

In terms of tissue distribution, predominantly expressed in cells of hematopoietic lineages.

It localises to the cytoplasm. The protein localises to the cell cortex. Functions as a Ras GTPase-activating protein. Plays an important role in the expansion and functions of natural killer T (NKT) cells in the liver by negatively regulating RAS activity and the down-stream ERK signaling pathway. The sequence is that of RAS protein activator like-3 (RASAL3) from Homo sapiens (Human).